A 607-amino-acid polypeptide reads, in one-letter code: Chaperone protein dnaK (607 aa).

A compositionally biased stretch (polar residues) spans 579 to 591 (KASETSNAKTNGK). Positions 579–607 (KASETSNAKTNGKASEKEDVIDADFKAQE) are disordered. Positions 592-607 (ASEKEDVIDADFKAQE) are enriched in basic and acidic residues.

The protein belongs to the heat shock protein 70 family.

The protein localises to the plastid. The protein resides in the chloroplast. Functionally, acts as a chaperone. In Cyanidioschyzon merolae (strain NIES-3377 / 10D) (Unicellular red alga), this protein is Chaperone protein dnaK.